Here is a 185-residue protein sequence, read N- to C-terminus: MAEGHGDAKGATAHTAADGGHKAPFPPFQKETFASQLVSLTIAFVALYLIVSKIILPRVGGVIEERQKTIEGDLAAAQKLKGESDDALKAYEAELAQARSRAQAIGAETREKLNAAAEAERKTLEQRLAAKIADAEKTISATRTAAMGNVRGIASEAAAAIVQQLAGIQPDSKALDSAVNASIKG.

The disordered stretch occupies residues 1 to 23 (MAEGHGDAKGATAHTAADGGHKA). The segment covering 9 to 18 (KGATAHTAAD) has biased composition (low complexity). The helical transmembrane segment at 37 to 57 (LVSLTIAFVALYLIVSKIILP) threads the bilayer.

This sequence belongs to the ATPase B chain family. In terms of assembly, F-type ATPases have 2 components, F(1) - the catalytic core - and F(0) - the membrane proton channel. F(1) has five subunits: alpha(3), beta(3), gamma(1), delta(1), epsilon(1). F(0) has three main subunits: a(1), b(2) and c(10-14). The alpha and beta chains form an alternating ring which encloses part of the gamma chain. F(1) is attached to F(0) by a central stalk formed by the gamma and epsilon chains, while a peripheral stalk is formed by the delta and b chains.

It localises to the cell inner membrane. In terms of biological role, f(1)F(0) ATP synthase produces ATP from ADP in the presence of a proton or sodium gradient. F-type ATPases consist of two structural domains, F(1) containing the extramembraneous catalytic core and F(0) containing the membrane proton channel, linked together by a central stalk and a peripheral stalk. During catalysis, ATP synthesis in the catalytic domain of F(1) is coupled via a rotary mechanism of the central stalk subunits to proton translocation. Its function is as follows. Component of the F(0) channel, it forms part of the peripheral stalk, linking F(1) to F(0). The b'-subunit is a diverged and duplicated form of b found in plants and photosynthetic bacteria. This is ATP synthase subunit b 2 (atpF2) from Rhodopseudomonas palustris (strain BisB5).